A 978-amino-acid chain; its full sequence is Exocyst complex component 5 (978 aa).

The segment covering 1 to 11 has biased composition (polar residues); it reads MSWARNIQSRI. 2 disordered regions span residues 1–87 and 122–246; these read MSWA…TTTQ and TSPS…TTPY. Low complexity-rich tracts occupy residues 36-52 and 62-86; these read PSSPTLSALSSPITSLT and SQPTTNTTSLTSTSPPSPTISTTTT. Residues 122–142 show a composition bias toward polar residues; sequence TSPSMASPIGTSTGIQNPNAK. The span at 143–245 shows a compositional bias: low complexity; sequence PSSLPSPSQS…QPTPIKQTTP (103 aa). Positions 303–325 form a coiled coil; that stretch reads NTQLQLSQLESNIDRRLDDLAEE.

This sequence belongs to the SEC10 family. In terms of assembly, the exocyst complex is composed of sec3/exoc1, sec5/exoc2, sec6/exoc3, sec8/exoc4, sec10/exoc5, sec15/exoc6, exo70/exoc7 and exo84/exoc8.

Its function is as follows. Component of the exocyst complex involved in the docking of exocytic vesicles with fusion sites on the plasma membrane. The polypeptide is Exocyst complex component 5 (exoc5) (Dictyostelium discoideum (Social amoeba)).